Reading from the N-terminus, the 784-residue chain is Toll-like receptor 2 (784 aa).

Positions 1 to 20 are cleaved as a signal peptide; that stretch reads MPHTLWMVWVLGVIISLSKE. At 21–587 the chain is on the extracellular side; the sequence is ESSNQASLSC…VRLSVSECHR (567 aa). Cysteines 30 and 36 form a disulfide. 19 LRR repeats span residues 54-77, 78-101, 102-125, 126-150, 151-175, 176-199, 200-223, 224-250, 251-278, 279-308, 309-337, 338-361, 362-388, 389-414, 415-437, 438-457, 458-478, 479-500, and 501-524; these read VKSL…RCVN, LQAL…SLGS, LEHL…PLSS, LTFL…HLTK, LQIL…GLTF, LEEL…SIQN, VSHL…VTSS, VECL…TNSL, IKKF…QISG, LLEL…DPGK, VETL…LTER, VKRI…HLKS, LEYL…AWPS, LQTL…TLKN, LTNV…WPEK, MKYL…CIPK, TLEI…NLPQ, LKEL…LLPM, and LLVL…SFHT. A glycan (N-linked (GlcNAc...) asparagine) is linked at N114. The N-linked (GlcNAc...) asparagine glycan is linked to N199. A disulfide bridge connects residues C353 and C382. N-linked (GlcNAc...) asparagine glycosylation occurs at N414. C432 and C454 are disulfide-bonded. A glycan (N-linked (GlcNAc...) asparagine) is linked at N442. In terms of domain architecture, LRRCT spans 525 to 579; the sequence is LKTLEAGGNNFICSCEFLSFTQEQQALAKVLIDWPANYLCDSPSHVRGQQVQDVR. The helical transmembrane segment at 588-608 threads the bilayer; the sequence is TALVSGMCCALFLLILLTGVL. The Cytoplasmic segment spans residues 609–784; it reads CHRFHGLWYM…WVNLRAAIKS (176 aa). A TIR domain is found at 639–782; that stretch reads ICYDAFVSYS…GFWVNLRAAI (144 aa). K754 participates in a covalent cross-link: Glycyl lysine isopeptide (Lys-Gly) (interchain with G-Cter in ubiquitin). Positions 761-778 match the ATG16L1-binding motif motif; sequence YLEWPMDEAQREGFWVNL.

It belongs to the Toll-like receptor family. As to quaternary structure, interacts with LY96, TLR1 and TLR6 (via extracellular domain). TLR2 seems to exist in heterodimers with either TLR1 or TLR6 before stimulation by the ligand. The heterodimers form bigger oligomers in response to their corresponding ligands as well as further heterotypic associations with other receptors such as CD14 and/or CD36. Binds MYD88 (via TIR domain). Interacts with TICAM1. Interacts with CNPY3. Interacts with ATG16L1. Interacts with PPP1R11. Interacts with TICAM2. Interacts with TIRAP. In terms of processing, ubiquitinated at Lys-754 by PPP1R11, leading to its degradation. Deubiquitinated by USP2. Post-translationally, glycosylation of Asn-442 is critical for secretion of the N-terminal ectodomain of TLR2.

The protein localises to the membrane. Its subcellular location is the cytoplasmic vesicle. It localises to the phagosome membrane. It is found in the membrane raft. In terms of biological role, cooperates with LY96 to mediate the innate immune response to bacterial lipoproteins and other microbial cell wall components. Cooperates with TLR1 or TLR6 to mediate the innate immune response to bacterial lipoproteins or lipopeptides. Acts via MYD88 and TRAF6, leading to NF-kappa-B activation, cytokine secretion and the inflammatory response. May also promote apoptosis in response to lipoproteins. Forms activation clusters composed of several receptors depending on the ligand, these clusters trigger signaling from the cell surface and subsequently are targeted to the Golgi in a lipid-raft dependent pathway. Forms the cluster TLR2:TLR6:CD14:CD36 in response to diacylated lipopeptides and TLR2:TLR1:CD14 in response to triacylated lipopeptides. The sequence is that of Toll-like receptor 2 (TLR2) from Pan troglodytes (Chimpanzee).